We begin with the raw amino-acid sequence, 181 residues long: Probable cobalt-precorrin-6B C(15)-methyltransferase (decarboxylating) (181 aa).

Residues Thr-16, Gly-40–Gly-44, Asp-61, and Ala-89 contribute to the S-adenosyl-L-methionine site.

Belongs to the methyltransferase superfamily. Archaeal-type CbiT family.

It carries out the reaction Co-precorrin-6B + S-adenosyl-L-methionine = Co-precorrin-7 + S-adenosyl-L-homocysteine + CO2. It functions in the pathway cofactor biosynthesis; adenosylcobalamin biosynthesis; cob(II)yrinate a,c-diamide from sirohydrochlorin (anaerobic route): step 8/10. Catalyzes the methylation of C-15 in cobalt-precorrin-6B followed by the decarboxylation of C-12 to form cobalt-precorrin-7. In Methanococcus maripaludis (strain C6 / ATCC BAA-1332), this protein is Probable cobalt-precorrin-6B C(15)-methyltransferase (decarboxylating).